Here is a 289-residue protein sequence, read N- to C-terminus: MSSAPVELRDCPAPAKLNLFLHVVGRRPDGYHLLQTVFQLIDWSDTLHFARRPDRRLVRTTDILGVPADDDLVIRAARLLQAETGCTYGVDIAIEKRLPMGGGLGGGSSDAATTLLALNRLWGLDLPRAQLMKIGLKLGADVPFFVFGQNAFAEGIGEKLTPITLPPAAFVVIHPRVHVPTPAIFSDEGLTRDTPLTIITDFPDQQIVFAYGRNDLQAVAERKYGEIARALVWLRQFSPLARMTGSGACVFAPFDNVEHAQAVADQVPSEWEGRCAAGLTHHPLARFAV.

Residue lysine 16 is part of the active site. 99-109 serves as a coordination point for ATP; the sequence is PMGGGLGGGSS. Residue aspartate 141 is part of the active site.

The protein belongs to the GHMP kinase family. IspE subfamily.

The catalysed reaction is 4-CDP-2-C-methyl-D-erythritol + ATP = 4-CDP-2-C-methyl-D-erythritol 2-phosphate + ADP + H(+). It functions in the pathway isoprenoid biosynthesis; isopentenyl diphosphate biosynthesis via DXP pathway; isopentenyl diphosphate from 1-deoxy-D-xylulose 5-phosphate: step 3/6. Functionally, catalyzes the phosphorylation of the position 2 hydroxy group of 4-diphosphocytidyl-2C-methyl-D-erythritol. The chain is 4-diphosphocytidyl-2-C-methyl-D-erythritol kinase from Ralstonia pickettii (strain 12J).